A 353-amino-acid polypeptide reads, in one-letter code: Rhodopsin (353 aa).

The Extracellular portion of the chain corresponds to 1–36 (MNGTEGPYFYVPMVNTSGIVRSPYEYPQYYLVNPAA). Asn2 and Asn15 each carry an N-linked (GlcNAc...) asparagine glycan. Residues 37–61 (YAALGAYMFLLILVGFPINFLTLYV) form a helical membrane-spanning segment. The Cytoplasmic segment spans residues 62–73 (TIEHKKLRTPLN). The helical transmembrane segment at 74–96 (YILLNLAVADLFMVFGGFTTTMY) threads the bilayer. Residues 97–110 (TSMHGYFVLGRLGC) are Extracellular-facing. The cysteines at positions 110 and 187 are disulfide-linked. The helical transmembrane segment at 111-133 (NIEGFFATLGGEIALWSLVVLAI) threads the bilayer. Positions 134 to 136 (ERW) match the 'Ionic lock' involved in activated form stabilization motif. At 134 to 152 (ERWVVVCKPISNFRFGENH) the chain is on the cytoplasmic side. A helical transmembrane segment spans residues 153–173 (AIMGLAFTWLMALACAAPPLV). The Extracellular segment spans residues 174 to 202 (GWSRYIPEGMQCSCGIDYYTRAEGFNNES). Asn200 carries an N-linked (GlcNAc...) asparagine glycan. Residues 203–224 (FVIYMFICHFSIPLLVVFFCYG) form a helical membrane-spanning segment. Residues 225–252 (RLLCAVKEAAAAQQESETTQRAEREVTR) lie on the Cytoplasmic side of the membrane. The chain crosses the membrane as a helical span at residues 253–274 (MVIMMVIAFLVCWLPYASVAWW). At 275 to 286 (IFTHQGSDFGPV) the chain is on the extracellular side. A helical membrane pass occupies residues 287–308 (FMTIPAFFAKSSSIYNPMIYIC). An N6-(retinylidene)lysine modification is found at Lys296. Residues 309 to 353 (LNKQFRHCMITTLCCGKNPFEEEEGASTASKTEASSVSSSSVSPA) lie on the Cytoplasmic side of the membrane. S-palmitoyl cysteine attachment occurs at residues Cys322 and Cys323. Residues 331 to 353 (EEGASTASKTEASSVSSSSVSPA) are disordered. A compositionally biased stretch (low complexity) spans 334-353 (ASTASKTEASSVSSSSVSPA).

Belongs to the G-protein coupled receptor 1 family. Opsin subfamily. Post-translationally, phosphorylated on some or all of the serine and threonine residues present in the C-terminal region. Contains one covalently linked retinal chromophore.

It is found in the membrane. Its subcellular location is the cell projection. It localises to the cilium. The protein resides in the photoreceptor outer segment. In terms of biological role, photoreceptor required for image-forming vision at low light intensity. While most salt water fish species use retinal as chromophore, most freshwater fish use 3-dehydroretinal, or a mixture of retinal and 3-dehydroretinal. Light-induced isomerization of 11-cis to all-trans retinal triggers a conformational change that activates signaling via G-proteins. Subsequent receptor phosphorylation mediates displacement of the bound G-protein alpha subunit by arrestin and terminates signaling. This chain is Rhodopsin (rho), found in Diplodus vulgaris (Common two-banded seabream).